We begin with the raw amino-acid sequence, 59 residues long: UPF0434 protein Shewmr7_2490 (59 aa).

The protein belongs to the UPF0434 family.

The protein is UPF0434 protein Shewmr7_2490 of Shewanella sp. (strain MR-7).